A 511-amino-acid chain; its full sequence is Exodeoxyribonuclease 7 large subunit (511 aa).

Belongs to the XseA family. Heterooligomer composed of large and small subunits.

The protein localises to the cytoplasm. The catalysed reaction is Exonucleolytic cleavage in either 5'- to 3'- or 3'- to 5'-direction to yield nucleoside 5'-phosphates.. Functionally, bidirectionally degrades single-stranded DNA into large acid-insoluble oligonucleotides, which are then degraded further into small acid-soluble oligonucleotides. This chain is Exodeoxyribonuclease 7 large subunit, found in Brucella suis (strain ATCC 23445 / NCTC 10510).